A 302-amino-acid chain; its full sequence is Troponin T, cardiac muscle isoforms (302 aa).

The segment covering 1–55 (MSDSEEVVEEYEQEQEEEYVEEEEEEWLEEDDGQEDQVDEEEEETEETTAEEQED) has biased composition (acidic residues). 3 disordered regions span residues 1 to 99 (MSDS…GERL), 138 to 230 (KDRI…RKPL), and 280 to 302 (SDHQ…GRWK). Serine 2 is modified (N-acetylserine). Serine 2 is subject to Phosphoserine; by CK2. Over residues 65–79 (EGDREQEPGEGESKP) the composition is skewed to basic and acidic residues. Residues 82-93 (KPFMPNLVPPKI) show a composition bias toward pro residues. 2 stretches are compositionally biased toward basic and acidic residues: residues 138–186 (KDRI…EKEA) and 204–230 (KSEK…RKPL).

This sequence belongs to the troponin T family.

In terms of biological role, troponin T is the tropomyosin-binding subunit of troponin, the thin filament regulatory complex which confers calcium-sensitivity to striated muscle actomyosin ATPase activity. This Gallus gallus (Chicken) protein is Troponin T, cardiac muscle isoforms (TNNT2).